The sequence spans 315 residues: Ribosomal RNA small subunit methyltransferase H (315 aa).

S-adenosyl-L-methionine-binding positions include 37 to 39 (GGH), D57, F83, D105, and Q112.

Belongs to the methyltransferase superfamily. RsmH family.

Its subcellular location is the cytoplasm. It catalyses the reaction cytidine(1402) in 16S rRNA + S-adenosyl-L-methionine = N(4)-methylcytidine(1402) in 16S rRNA + S-adenosyl-L-homocysteine + H(+). Specifically methylates the N4 position of cytidine in position 1402 (C1402) of 16S rRNA. This is Ribosomal RNA small subunit methyltransferase H from Pseudomonas fluorescens (strain Pf0-1).